The following is a 617-amino-acid chain: Type VII secretion systems protein EssD (617 aa).

Residues 420–448 form a disordered region; the sequence is QNHVTHGPKDSMVRSEGKHSISSHEMNSS. The span at 426–438 shows a compositional bias: basic and acidic residues; the sequence is GPKDSMVRSEGKH.

It belongs to the EssD family. Interacts (via C-terminal) with EssG; this interaction blocks EssD activity. Interacts with EssE.

Its subcellular location is the secreted. The protein resides in the cell membrane. In terms of biological role, component of the type VII secretion system (Ess). Plays a role in Ess secretion during infection. Required for the efficient secretion of EsxA. Required for abscess formation and staphylococcal persistence in host tissue. Possesses a toxic DNase activity that is modulated by EssG by forming a nuclease toxin-antitoxin pair. This nuclease toxin targets competitor bacteria. This Staphylococcus aureus (strain Newman) protein is Type VII secretion systems protein EssD.